Here is a 377-residue protein sequence, read N- to C-terminus: 3-dehydroquinate synthase (377 aa).

Residues 115 to 119, 139 to 140, K152, and K161 each bind NAD(+); these read GVIGD and TS. Zn(2+) contacts are provided by E194, H256, and H275.

Belongs to the sugar phosphate cyclases superfamily. Dehydroquinate synthase family. The cofactor is NAD(+). Co(2+) serves as cofactor. It depends on Zn(2+) as a cofactor.

Its subcellular location is the cytoplasm. The enzyme catalyses 7-phospho-2-dehydro-3-deoxy-D-arabino-heptonate = 3-dehydroquinate + phosphate. Its pathway is metabolic intermediate biosynthesis; chorismate biosynthesis; chorismate from D-erythrose 4-phosphate and phosphoenolpyruvate: step 2/7. Its function is as follows. Catalyzes the conversion of 3-deoxy-D-arabino-heptulosonate 7-phosphate (DAHP) to dehydroquinate (DHQ). The sequence is that of 3-dehydroquinate synthase from Rhizobium meliloti (strain 1021) (Ensifer meliloti).